We begin with the raw amino-acid sequence, 130 residues long: Small ribosomal subunit protein uS11 (130 aa).

Belongs to the universal ribosomal protein uS11 family. In terms of assembly, part of the 30S ribosomal subunit. Interacts with proteins S7 and S18. Binds to IF-3.

In terms of biological role, located on the platform of the 30S subunit, it bridges several disparate RNA helices of the 16S rRNA. Forms part of the Shine-Dalgarno cleft in the 70S ribosome. The sequence is that of Small ribosomal subunit protein uS11 from Nitratiruptor sp. (strain SB155-2).